Reading from the N-terminus, the 374-residue chain is Histidinol-phosphate aminotransferase (374 aa).

At Lys211 the chain carries N6-(pyridoxal phosphate)lysine. A compositionally biased stretch (low complexity) spans 351 to 368 (GNSSQDSASKSNSSANND). Residues 351 to 374 (GNSSQDSASKSNSSANNDELNASN) form a disordered region.

Belongs to the class-II pyridoxal-phosphate-dependent aminotransferase family. Histidinol-phosphate aminotransferase subfamily. As to quaternary structure, homodimer. Requires pyridoxal 5'-phosphate as cofactor.

The catalysed reaction is L-histidinol phosphate + 2-oxoglutarate = 3-(imidazol-4-yl)-2-oxopropyl phosphate + L-glutamate. It functions in the pathway amino-acid biosynthesis; L-histidine biosynthesis; L-histidine from 5-phospho-alpha-D-ribose 1-diphosphate: step 7/9. The chain is Histidinol-phosphate aminotransferase from Photobacterium profundum (strain SS9).